The primary structure comprises 300 residues: Epimerase family protein SACOL0834 (300 aa).

This sequence belongs to the NAD(P)-dependent epimerase/dehydratase family. SDR39U1 subfamily.

In Staphylococcus aureus (strain COL), this protein is Epimerase family protein SACOL0834.